We begin with the raw amino-acid sequence, 289 residues long: Bifunctional protein FolD (289 aa).

NADP(+)-binding positions include 166–168 (GRS), Ser191, and Ile232.

The protein belongs to the tetrahydrofolate dehydrogenase/cyclohydrolase family. As to quaternary structure, homodimer.

The catalysed reaction is (6R)-5,10-methylene-5,6,7,8-tetrahydrofolate + NADP(+) = (6R)-5,10-methenyltetrahydrofolate + NADPH. The enzyme catalyses (6R)-5,10-methenyltetrahydrofolate + H2O = (6R)-10-formyltetrahydrofolate + H(+). It functions in the pathway one-carbon metabolism; tetrahydrofolate interconversion. Its function is as follows. Catalyzes the oxidation of 5,10-methylenetetrahydrofolate to 5,10-methenyltetrahydrofolate and then the hydrolysis of 5,10-methenyltetrahydrofolate to 10-formyltetrahydrofolate. This chain is Bifunctional protein FolD, found in Synechococcus sp. (strain JA-3-3Ab) (Cyanobacteria bacterium Yellowstone A-Prime).